A 484-amino-acid chain; its full sequence is Dynein regulatory complex subunit 2 (484 aa).

2 coiled-coil regions span residues 92–160 (VDCK…RKTI) and 374–403 (KEQE…GMEN).

Belongs to the DRC2 family. Component of the nexin-dynein regulatory complex (N-DRC). Interacts with DRC1.

The protein resides in the cytoplasm. Its subcellular location is the cytoskeleton. The protein localises to the flagellum basal body. It localises to the cell projection. It is found in the cilium. The protein resides in the flagellum. Its subcellular location is the flagellum axoneme. Functionally, component of the nexin-dynein regulatory complex (N-DRC), a key regulator of ciliary/flagellar motility which maintains the alignment and integrity of the distal axoneme and regulates microtubule sliding in motile axonemes. Plays a critical role in the assembly of N-DRC and also stabilizes the assembly of multiple inner dynein arms and radial spokes. Coassembles with DRC1 to form a central scaffold needed for assembly of the N-DRC and its attachment to the outer doublet microtubules. In Macaca fascicularis (Crab-eating macaque), this protein is Dynein regulatory complex subunit 2 (CCDC65).